The primary structure comprises 201 residues: Pyrrolidone-carboxylate peptidase (201 aa).

Residues Glu-81, Cys-143, and His-168 contribute to the active site.

This sequence belongs to the peptidase C15 family. In terms of assembly, homotetramer.

The protein resides in the cytoplasm. It carries out the reaction Release of an N-terminal pyroglutamyl group from a polypeptide, the second amino acid generally not being Pro.. Its function is as follows. Removes 5-oxoproline from various penultimate amino acid residues except L-proline. The sequence is that of Pyrrolidone-carboxylate peptidase (pcp) from Halalkalibacterium halodurans (strain ATCC BAA-125 / DSM 18197 / FERM 7344 / JCM 9153 / C-125) (Bacillus halodurans).